A 418-amino-acid chain; its full sequence is S-adenosylmethionine synthase (418 aa).

Histidine 16 is a binding site for ATP. Aspartate 18 contacts Mg(2+). A K(+)-binding site is contributed by glutamate 44. L-methionine is bound by residues glutamate 57 and glutamine 100. A flexible loop region spans residues 100 to 110 (QSPDIAQGVDS). Residues 174 to 176 (DGK), aspartate 259, 265 to 266 (RK), alanine 282, and lysine 286 each bind ATP. Residue aspartate 259 participates in L-methionine binding. Residue lysine 290 participates in L-methionine binding.

The protein belongs to the AdoMet synthase family. Homotetramer; dimer of dimers. It depends on Mg(2+) as a cofactor. K(+) is required as a cofactor.

Its subcellular location is the cytoplasm. It carries out the reaction L-methionine + ATP + H2O = S-adenosyl-L-methionine + phosphate + diphosphate. It participates in amino-acid biosynthesis; S-adenosyl-L-methionine biosynthesis; S-adenosyl-L-methionine from L-methionine: step 1/1. Catalyzes the formation of S-adenosylmethionine (AdoMet) from methionine and ATP. The overall synthetic reaction is composed of two sequential steps, AdoMet formation and the subsequent tripolyphosphate hydrolysis which occurs prior to release of AdoMet from the enzyme. This chain is S-adenosylmethionine synthase, found in Acaryochloris marina (strain MBIC 11017).